Here is a 125-residue protein sequence, read N- to C-terminus: Small ribosomal subunit protein uS12 (125 aa).

The residue at position 89 (aspartate 89) is a 3-methylthioaspartic acid.

This sequence belongs to the universal ribosomal protein uS12 family. In terms of assembly, part of the 30S ribosomal subunit. Contacts proteins S8 and S17. May interact with IF1 in the 30S initiation complex.

Its function is as follows. With S4 and S5 plays an important role in translational accuracy. Interacts with and stabilizes bases of the 16S rRNA that are involved in tRNA selection in the A site and with the mRNA backbone. Located at the interface of the 30S and 50S subunits, it traverses the body of the 30S subunit contacting proteins on the other side and probably holding the rRNA structure together. The combined cluster of proteins S8, S12 and S17 appears to hold together the shoulder and platform of the 30S subunit. This chain is Small ribosomal subunit protein uS12, found in Bordetella avium (strain 197N).